The primary structure comprises 402 residues: Multidrug resistance protein MdtH (402 aa).

The next 11 membrane-spanning stretches (helical) occupy residues 13 to 33 (YFLL…FPLI), 34 to 54 (SIRF…ALGL), 99 to 116 (PWVL…GTLF), 139 to 159 (LLMM…SWLL), 165 to 185 (LVCG…AWLL), 214 to 234 (VLTL…LPVM), 243 to 263 (AAVK…LYPL), 277 to 297 (LMAG…ASNL), 300 to 320 (LFTL…ARET), 340 to 360 (LGLA…FDAG), and 368 to 388 (LPWA…WWQF).

The protein belongs to the major facilitator superfamily. DHA1 family. MdtH (TC 2.A.1.2.21) subfamily.

The protein localises to the cell inner membrane. This chain is Multidrug resistance protein MdtH, found in Cronobacter sakazakii (strain ATCC BAA-894) (Enterobacter sakazakii).